The primary structure comprises 131 residues: Small ribosomal subunit protein uS8 (131 aa).

This sequence belongs to the universal ribosomal protein uS8 family. In terms of assembly, part of the 30S ribosomal subunit. Contacts proteins S5 and S12.

Functionally, one of the primary rRNA binding proteins, it binds directly to 16S rRNA central domain where it helps coordinate assembly of the platform of the 30S subunit. In Acholeplasma laidlawii (strain PG-8A), this protein is Small ribosomal subunit protein uS8.